The following is a 751-amino-acid chain: MPYNPKEIEQWYKENYKYFFGEGDKILIIDTPPPYPAPLWHIGAALSYALQDFIARGFRKLGYKVIFPEGFDGNGIPIEMYLEKYEKIPFGSIDREEYIKKCRQILDSWREKMDKILKDLLLSMDFEHRYNTDDPEYRALTQKTFAELWEKGLIYEAEYPINYCPHCKTAIADAEIERKIKKTKLVYIKFKIKDSDDYITVATTRPELLGACKAIIVHPDDERYKKYHNKIAIVPYYNREIPIIPHKMADPNFGTGAVMICSYGDWVDVQIFRELQLKPEKIIDENGRLTIEPVKGLTTKEGREKMIEVLKQLGVVEKIEEIEHSVPVHERCETEIEIIPMKEFYLKQLPFKEEIKKLSKEIEFIPERYRKNLENWIDSITIDWPISRRRWYATEIPLWYCPKCGYIHVAKDGKYHQPWKEEMVCPRCNTKMVGETRVLDTWMDSSITIYYLIKKYSKILGIDEEGLFNNYTLRPQGYEIIRTWLYYTLLRVYQLTGKKAFDFVVINGMGLDKHGRKMSKRYGNVIEPETLLEKYGADTLRYWFAMEISIGEDYRINEQKIAGIMKFMNKVWNIANYISQYQYRETQNLKPTDEWIINYVKYLENKAIEYIRNFEFNKLARELYRFVWDVFANHYIELTKKRAKNNDDSAIYALYFVFERVLNMLSIFSPGIAKYLAKKLYNKDIEKEKLKYWGKVRLDLLYKGEKLIEFNNYVWKLKTSQGKKLKDPISIEIPKELEIFKEDLILLHNIQ.

ATP is bound at residue K520.

Belongs to the class-I aminoacyl-tRNA synthetase family. ValS type 2 subfamily.

It localises to the cytoplasm. It carries out the reaction tRNA(Val) + L-valine + ATP = L-valyl-tRNA(Val) + AMP + diphosphate. Its function is as follows. Catalyzes the attachment of valine to tRNA(Val). As ValRS can inadvertently accommodate and process structurally similar amino acids such as threonine, to avoid such errors, it has a 'posttransfer' editing activity that hydrolyzes mischarged Thr-tRNA(Val) in a tRNA-dependent manner. The protein is Valine--tRNA ligase (valS) of Nanoarchaeum equitans (strain Kin4-M).